We begin with the raw amino-acid sequence, 209 residues long: Imidazole glycerol phosphate synthase subunit HisH (209 aa).

Positions 5–209 (AIAIIDYDMG…LRNFVALVKD (205 aa)) constitute a Glutamine amidotransferase type-1 domain. Cys-83 functions as the Nucleophile in the catalytic mechanism. Residues His-188 and Glu-190 contribute to the active site.

As to quaternary structure, heterodimer of HisH and HisF.

It localises to the cytoplasm. The enzyme catalyses 5-[(5-phospho-1-deoxy-D-ribulos-1-ylimino)methylamino]-1-(5-phospho-beta-D-ribosyl)imidazole-4-carboxamide + L-glutamine = D-erythro-1-(imidazol-4-yl)glycerol 3-phosphate + 5-amino-1-(5-phospho-beta-D-ribosyl)imidazole-4-carboxamide + L-glutamate + H(+). The catalysed reaction is L-glutamine + H2O = L-glutamate + NH4(+). The protein operates within amino-acid biosynthesis; L-histidine biosynthesis; L-histidine from 5-phospho-alpha-D-ribose 1-diphosphate: step 5/9. Functionally, IGPS catalyzes the conversion of PRFAR and glutamine to IGP, AICAR and glutamate. The HisH subunit catalyzes the hydrolysis of glutamine to glutamate and ammonia as part of the synthesis of IGP and AICAR. The resulting ammonia molecule is channeled to the active site of HisF. The polypeptide is Imidazole glycerol phosphate synthase subunit HisH (Thermosynechococcus vestitus (strain NIES-2133 / IAM M-273 / BP-1)).